Here is a 439-residue protein sequence, read N- to C-terminus: Proline--tRNA ligase (439 aa).

It belongs to the class-II aminoacyl-tRNA synthetase family. ProS type 2 subfamily. As to quaternary structure, homodimer.

It is found in the cytoplasm. It carries out the reaction tRNA(Pro) + L-proline + ATP = L-prolyl-tRNA(Pro) + AMP + diphosphate. In terms of biological role, catalyzes the attachment of proline to tRNA(Pro) in a two-step reaction: proline is first activated by ATP to form Pro-AMP and then transferred to the acceptor end of tRNA(Pro). In Beijerinckia indica subsp. indica (strain ATCC 9039 / DSM 1715 / NCIMB 8712), this protein is Proline--tRNA ligase.